The sequence spans 276 residues: 4-deoxy-L-threo-5-hexosulose-uronate ketol-isomerase (276 aa).

Residues histidine 194, histidine 196, glutamate 201, and histidine 243 each coordinate Zn(2+).

It belongs to the KduI family. Zn(2+) is required as a cofactor.

The enzyme catalyses 5-dehydro-4-deoxy-D-glucuronate = 3-deoxy-D-glycero-2,5-hexodiulosonate. It participates in glycan metabolism; pectin degradation; 2-dehydro-3-deoxy-D-gluconate from pectin: step 4/5. Catalyzes the isomerization of 5-dehydro-4-deoxy-D-glucuronate to 3-deoxy-D-glycero-2,5-hexodiulosonate. The sequence is that of 4-deoxy-L-threo-5-hexosulose-uronate ketol-isomerase from Halalkalibacterium halodurans (strain ATCC BAA-125 / DSM 18197 / FERM 7344 / JCM 9153 / C-125) (Bacillus halodurans).